Consider the following 256-residue polypeptide: BI1-like protein (256 aa).

The next 7 membrane-spanning stretches (helical) occupy residues 53–73, 85–105, 113–133, 138–158, 167–187, 189–209, and 228–248; these read VYGI…VVVL, PGIL…LHIY, LILL…SCAM, IVLQ…AYTF, FSFL…TSFI, MFFP…ALVF, and EYIL…LTIL.

This sequence belongs to the BI1 family.

It is found in the membrane. The protein is BI1-like protein of Arabidopsis thaliana (Mouse-ear cress).